The sequence spans 348 residues: Zinc finger and SCAN domain-containing protein 16 (348 aa).

The 83-residue stretch at 41–123 folds into the SCAN box domain; it reads RQHFRKLCYQ…TVLEDLEREL (83 aa). 2 disordered regions span residues 160 to 184 and 205 to 226; these read PKKT…TKNE and RLNK…EGRS. Residues 163-184 are compositionally biased toward basic and acidic residues; it reads TQLEQEAGKPQRNGDKTRTKNE. C2H2-type zinc fingers lie at residues 236–258, 264–286, 292–314, and 320–342; these read YKCD…RRTH, YKCD…HRVH, YKCK…QRIH, and YECD…QRIH.

The protein belongs to the krueppel C2H2-type zinc-finger protein family.

It localises to the nucleus. In terms of biological role, may be involved in transcriptional regulation. The chain is Zinc finger and SCAN domain-containing protein 16 (ZSCAN16) from Homo sapiens (Human).